The chain runs to 134 residues: Interleukin-5 (134 aa).

The signal sequence occupies residues 1–19 (MRMLLHLSLLALGASYMYA). The O-linked (GalNAc...) threonine glycan is linked to Thr22. 2 N-linked (GlcNAc...) asparagine glycosylation sites follow: Asn47 and Asn90.

It belongs to the IL-5 family. Homodimer; disulfide-linked. Interacts with IL5RA. Interacts with CSF2RB.

It localises to the secreted. Homodimeric cytokine expressed predominantly by T-lymphocytes and NK cells that plays an important role in the survival, differentiation, and chemotaxis of eosinophils. Also acts on activated and resting B-cells to induce immunoglobulin production, growth, and differentiation. Mechanistically, exerts its biological effects through a receptor composed of IL5RA subunit and the cytokine receptor common subunit beta/CSF2RB. Binding to the receptor leads to activation of various kinases including LYN, SYK and JAK2 and thereby propagates signals through the RAS-MAPK and JAK-STAT5 pathways respectively. The protein is Interleukin-5 (IL5) of Cercocebus atys (Sooty mangabey).